The primary structure comprises 100 residues: Small ribosomal subunit protein bS18c (100 aa).

Belongs to the bacterial ribosomal protein bS18 family. Part of the 30S ribosomal subunit.

Its subcellular location is the plastid. It localises to the chloroplast. The sequence is that of Small ribosomal subunit protein bS18c from Pleurastrum terricola (Filamentous green alga).